We begin with the raw amino-acid sequence, 162 residues long: 2-C-methyl-D-erythritol 2,4-cyclodiphosphate synthase (162 aa).

Residues Asp12 and His14 each coordinate a divalent metal cation. Residues Asp12–His14 and His38–Ser39 contribute to the 4-CDP-2-C-methyl-D-erythritol 2-phosphate site. His46 lines the a divalent metal cation pocket. Residues Asp60 to Gly62, Phe65 to Asp69, and Arg146 each bind 4-CDP-2-C-methyl-D-erythritol 2-phosphate.

It belongs to the IspF family. Homotrimer. A divalent metal cation serves as cofactor.

It catalyses the reaction 4-CDP-2-C-methyl-D-erythritol 2-phosphate = 2-C-methyl-D-erythritol 2,4-cyclic diphosphate + CMP. The protein operates within isoprenoid biosynthesis; isopentenyl diphosphate biosynthesis via DXP pathway; isopentenyl diphosphate from 1-deoxy-D-xylulose 5-phosphate: step 4/6. Involved in the biosynthesis of isopentenyl diphosphate (IPP) and dimethylallyl diphosphate (DMAPP), two major building blocks of isoprenoid compounds. Catalyzes the conversion of 4-diphosphocytidyl-2-C-methyl-D-erythritol 2-phosphate (CDP-ME2P) to 2-C-methyl-D-erythritol 2,4-cyclodiphosphate (ME-CPP) with a corresponding release of cytidine 5-monophosphate (CMP). The sequence is that of 2-C-methyl-D-erythritol 2,4-cyclodiphosphate synthase from Bordetella petrii (strain ATCC BAA-461 / DSM 12804 / CCUG 43448).